The following is a 368-amino-acid chain: Ankyrin repeat domain-containing protein 40 (368 aa).

Methionine 1 bears the N-acetylmethionine mark. 2 ANK repeats span residues 9 to 38 (EQQERLREAAALGDIREVQKLVESGVDVNS) and 43 to 72 (NGWTCLHWACKRNHGQVVSYLLKSGADKEI). Disordered regions lie at residues 93 to 115 (MGVEEEDDDDDDDDNLPQLKKES), 139 to 176 (DSAQMQNGGPSTPPASPPADGSPPLLPPGEPPLLGTFP), and 196 to 238 (ILRT…NGTY). Positions 95–107 (VEEEDDDDDDDDN) are enriched in acidic residues. The segment covering 149–169 (STPPASPPADGSPPLLPPGEP) has biased composition (pro residues). Residues 212-224 (PVSQSRSLFSSVP) show a composition bias toward polar residues.

This Homo sapiens (Human) protein is Ankyrin repeat domain-containing protein 40 (ANKRD40).